A 241-amino-acid chain; its full sequence is 1-(5-phosphoribosyl)-5-[(5-phosphoribosylamino)methylideneamino] imidazole-4-carboxamide isomerase (241 aa).

Asp8 functions as the Proton acceptor in the catalytic mechanism. The active-site Proton donor is the Asp130.

The protein belongs to the HisA/HisF family.

Its subcellular location is the cytoplasm. The enzyme catalyses 1-(5-phospho-beta-D-ribosyl)-5-[(5-phospho-beta-D-ribosylamino)methylideneamino]imidazole-4-carboxamide = 5-[(5-phospho-1-deoxy-D-ribulos-1-ylimino)methylamino]-1-(5-phospho-beta-D-ribosyl)imidazole-4-carboxamide. It participates in amino-acid biosynthesis; L-histidine biosynthesis; L-histidine from 5-phospho-alpha-D-ribose 1-diphosphate: step 4/9. This is 1-(5-phosphoribosyl)-5-[(5-phosphoribosylamino)methylideneamino] imidazole-4-carboxamide isomerase from Flavobacterium psychrophilum (strain ATCC 49511 / DSM 21280 / CIP 103535 / JIP02/86).